Consider the following 182-residue polypeptide: Large ribosomal subunit protein uL13 (182 aa).

Belongs to the universal ribosomal protein uL13 family. Part of the 50S ribosomal subunit.

Its function is as follows. This protein is one of the early assembly proteins of the 50S ribosomal subunit, although it is not seen to bind rRNA by itself. It is important during the early stages of 50S assembly. This is Large ribosomal subunit protein uL13 from Pyrobaculum neutrophilum (strain DSM 2338 / JCM 9278 / NBRC 100436 / V24Sta) (Thermoproteus neutrophilus).